The primary structure comprises 161 residues: Nucleotide-binding protein PputGB1_4497 (161 aa).

It belongs to the YajQ family.

Functionally, nucleotide-binding protein. The sequence is that of Nucleotide-binding protein PputGB1_4497 from Pseudomonas putida (strain GB-1).